We begin with the raw amino-acid sequence, 220 residues long: MPSFSTQSITRPSVGVAIGPDGIYRALYGWYGNEQPLEIDKCSYDLSTCSPVVSSGPTIGDGYGGFYDGTNIWFSGSDEANDQGVVASYNPSTGAFNYAYYPGNSTKYVIKIFYYNGYYYLITCCDPGTLLKCTNPLNPSTCTQLNINAPTSFTVQEYYMYTQGSYALLSYFQKNMNNKLFSLCNFDGTNLYNCINIYSTTGILHYLHHSLLEEQYVEII.

It localises to the virion. The polypeptide is Coat protein TP4 (Thermoproteus tenax (TTV1)).